Here is a 307-residue protein sequence, read N- to C-terminus: Putative S-adenosyl-L-methionine-dependent methyltransferase MMAR_4570 (307 aa).

S-adenosyl-L-methionine-binding positions include D128 and 157 to 158 (DL).

Belongs to the UPF0677 family.

In terms of biological role, exhibits S-adenosyl-L-methionine-dependent methyltransferase activity. The protein is Putative S-adenosyl-L-methionine-dependent methyltransferase MMAR_4570 of Mycobacterium marinum (strain ATCC BAA-535 / M).